The chain runs to 293 residues: Exosome complex component RRP4 (293 aa).

Residues 79 to 159 (EVGDIVVGRI…SDGAVSLHTR (81 aa)) form the S1 motif domain. Position 124 is a phosphoserine (Ser-124).

The protein belongs to the RRP4 family. In terms of assembly, component of the RNA exosome core complex (Exo-9), composed of EXOSC1, EXOSC2, EXOSC3, EXOSC4, EXOSC5, EXOSC6, EXOSC7, EXOSC8 and EXOSC9; within the complex interacts with EXOSC4 and EXOSC7. The catalytically inactive RNA exosome core complex (Exo-9) associates with the catalytic subunit EXOSC10/RRP6. Exo-9 may associate with DIS3 to form the nucleolar exosome complex, or DIS3L to form the cytoplasmic exosome complex. Exo-9 is formed by a hexameric base ring consisting of the heterodimers EXOSC4-EXOSC9, EXOSC5-EXOSC8 and EXOSC6-EXOSC7, and a cap ring consisting of EXOSC1, EXOSC2 and EXOSC3. The RNA exosome complex associates with cofactors C1D/RRP47, MPHOSPH6/MPP6 and MTREX/MTR4. Interacts with GTPBP1. Interacts with ZFP36L1 (via N-terminus).

Its subcellular location is the cytoplasm. The protein resides in the nucleus. The protein localises to the nucleolus. Its function is as follows. Non-catalytic component of the RNA exosome complex which has 3'-&gt;5' exoribonuclease activity and participates in a multitude of cellular RNA processing and degradation events. In the nucleus, the RNA exosome complex is involved in proper maturation of stable RNA species such as rRNA, snRNA and snoRNA, in the elimination of RNA processing by-products and non-coding 'pervasive' transcripts, such as antisense RNA species and promoter-upstream transcripts (PROMPTs), and of mRNAs with processing defects, thereby limiting or excluding their export to the cytoplasm. The RNA exosome may be involved in Ig class switch recombination (CSR) and/or Ig variable region somatic hypermutation (SHM) by targeting AICDA deamination activity to transcribed dsDNA substrates. In the cytoplasm, the RNA exosome complex is involved in general mRNA turnover and specifically degrades inherently unstable mRNAs containing AU-rich elements (AREs) within their 3' untranslated regions, and in RNA surveillance pathways, preventing translation of aberrant mRNAs. It seems to be involved in degradation of histone mRNA. The catalytic inactive RNA exosome core complex of 9 subunits (Exo-9) is proposed to play a pivotal role in the binding and presentation of RNA for ribonucleolysis, and to serve as a scaffold for the association with catalytic subunits and accessory proteins or complexes. EXOSC2 as peripheral part of the Exo-9 complex stabilizes the hexameric ring of RNase PH-domain subunits through contacts with EXOSC4 and EXOSC7. The polypeptide is Exosome complex component RRP4 (Homo sapiens (Human)).